The following is a 645-amino-acid chain: UvrABC system protein C (645 aa).

The 80-residue stretch at 12–91 folds into the GIY-YIG domain; it reads TGPGVYLYKN…IKQRKPRFNV (80 aa). The UVR domain occupies 202 to 237; that stretch reads ADLERSLEVRMQEAAAAEQFELAAKYRDLLVTLHQL.

This sequence belongs to the UvrC family. Interacts with UvrB in an incision complex.

It localises to the cytoplasm. In terms of biological role, the UvrABC repair system catalyzes the recognition and processing of DNA lesions. UvrC both incises the 5' and 3' sides of the lesion. The N-terminal half is responsible for the 3' incision and the C-terminal half is responsible for the 5' incision. The protein is UvrABC system protein C of Acidobacterium capsulatum (strain ATCC 51196 / DSM 11244 / BCRC 80197 / JCM 7670 / NBRC 15755 / NCIMB 13165 / 161).